An 880-amino-acid chain; its full sequence is MGSTRLRNASVWLCGLLCLLQVVPSINADVSGCKPGFSSAEYIFSVNRRELERGRKLGKVNFSDCTTRKHGLYDVGDSRFRVLPDGTVLVKRHVKLHKDTKFTISTWDARGIKHSTNIAVASKRHRSGEEAHSRSSKLPVLTFPETHTGLKRKKRDWVIPPIKVSENERGPFPKRLVQIKSNKDRFNKVYYSITGQGADNPPQGVFRIEWETGWMLVTRPLDREEYDKYVLSSHAVSENGSPVEEPMEITINVIDQNDNRPKFTQDVFRGSVREGVQPGTQVMAVSATDEDDNIDSLNGVLSYSILKQDPEEPIPNLFTINRETGVISLIGTGLDREKFPEYTLTVQATDLEGAGLSVEGKAIIQITDANDNAPIFDPKTYTALVPENEIGFEVQRLSVTDLDMPGTPAWQAVYKIRVNEGGFFNITTDPESNQGILTTAKGLDFELRKQYVLQITVENAEPFSVPLPTSTATVTVTVEDVNEAPFFVPAVSRVDVSEDLSRGEKIISLVAQDPDKQQIQKLSYFIGNDPARWLTVNKDNGIVTGNGNLDRESEYVKNNTYTVIMLVTDDGVSVGTGTGTLILHVLDVNDNGPVPSPRVFTMCDQNPEPQVLTISDADIPPNTYPYKVSLSHGSDLTWKAELDSKGTSMLLSPTQQLKKGDYSIYVLLSDAQNNPQLTVVNATVCSCEGKAIKCQEKLVGGFDLPIILVILGSVLALLILFLLLLLFLKRKKVVKEPLLLPEDDTRDNIFYYGEEGGGEEDQDYDLSQLHRGLDSRPDIMRNDVVPTLMPAPHYRPRPSNPDEIGNFIDENLDAADNDPTAPPYDSLLVFDYEGSGSEAASLSSLNSSNSNDEHDYNYLSDWGSRFRKLADMYGGDDDEE.

The N-terminal stretch at Met-1–Ala-28 is a signal peptide. A propeptide spanning residues Asp-29–Arg-155 is cleaved from the precursor. Asn-61 carries N-linked (GlcNAc...) asparagine glycosylation. 5 Cadherin domains span residues Asp-156–Phe-263, Thr-264–Phe-376, Asp-377–Phe-487, Val-488–Pro-593, and Val-594–Leu-704. Topologically, residues Asp-156 to Asp-703 are extracellular. O-linked (GalNAc...) threonine glycosylation is found at Thr-343, Thr-382, and Thr-400. N-linked (GlcNAc...) asparagine glycosylation occurs at Asn-425. O-linked (GalNAc...) threonine glycosylation is found at Thr-428, Thr-469, Thr-471, Thr-473, and Thr-475. A glycan (N-linked (GlcNAc...) asparagine) is linked at Asn-558. Thr-562, Thr-576, Thr-578, and Thr-580 each carry an O-linked (GalNAc...) threonine glycan. Intrachain disulfides connect Cys-603–Cys-687 and Cys-685–Cys-694. Residue Asn-681 is glycosylated (N-linked (GlcNAc...) asparagine). The chain crosses the membrane as a helical span at residues Leu-704 to Leu-728. Residues Lys-729–Glu-880 are Cytoplasmic-facing. The segment at Pro-790 to Ser-826 is disordered.

As to quaternary structure, interacts with CTNNB1.

Its subcellular location is the cell membrane. Its function is as follows. Cadherins are calcium-dependent cell adhesion proteins. They preferentially interact with themselves in a homophilic manner in connecting cells; cadherins may thus contribute to the sorting of heterogeneous cell types. The protein is EP-cadherin of Xenopus laevis (African clawed frog).